The following is a 347-amino-acid chain: Melatonin receptor type 1B-B (347 aa).

At 1–36 (MPENIAFLTNSTDLGHVGRALGSSARPAWAIAVLAS) the chain is on the extracellular side. Asn-10 carries an N-linked (GlcNAc...) asparagine glycan. A helical transmembrane segment spans residues 37-57 (VLIFTTVVDVLGNLLVIISVF). The Cytoplasmic segment spans residues 58 to 72 (RNRKLRNAGNVFVVS). The chain crosses the membrane as a helical span at residues 73-93 (LAFADLVVAFYPYPLVLYAIF). The Extracellular segment spans residues 94–105 (HDGWSLGETQCK). Cys-104 and Cys-181 are oxidised to a cystine. A helical transmembrane segment spans residues 106-126 (ISGFLMGLSVIGSVFNITGIA). The Cytoplasmic portion of the chain corresponds to 127-148 (INRYCYICHSFAYGRLYSFRNT). The helical transmembrane segment at 149-169 (LLLVALIWALTVLAILPNFFV) threads the bilayer. At 170–191 (GSLSYDPRVYSCTFTQTASSSY) the chain is on the extracellular side. A helical transmembrane segment spans residues 192-212 (TVVVVVVHFLVPIAVVTFCYL). The Cytoplasmic portion of the chain corresponds to 213-244 (RIWVLVIQVRRKVKSEERSRVRPSDLRNFVTM). A helical transmembrane segment spans residues 245-265 (FVVFVLFAICWAPLNLIGLVV). Over 266-278 (AINPEVMAPRVPE) the chain is Extracellular. A helical transmembrane segment spans residues 279 to 299 (WLFVVSYFMAYFNSCLNAIIY). Over 300 to 347 (GLLNRNFRKEYVRIMTAVWIPRRFVTETSRAATDGMRSKPSPAINNNE) the chain is Cytoplasmic.

This sequence belongs to the G-protein coupled receptor 1 family.

It is found in the cell membrane. Its function is as follows. High affinity receptor for melatonin. The activity of this receptor is mediated by pertussis toxin sensitive G proteins that inhibits adenylate cyclase activity. In Danio rerio (Zebrafish), this protein is Melatonin receptor type 1B-B (mtnr1bb).